The sequence spans 366 residues: Inactive protein RESTRICTED TEV MOVEMENT 2 (366 aa).

Positions 14 to 121 (VQYEDFVPKS…LPETSRTEAA (108 aa)) constitute a sHSP domain. The A-1 repeat unit spans residues 129–133 (LEEKR). Residues 129 to 220 (LEEKRLLEES…LEERRLEERK (92 aa)) are 6 X 5 AA repeats A of L-E-E-[SKR]-[ERK]. The A-2 repeat unit spans residues 135–139 (LEESR). Residues 156-160 (LEEKE) form an A-3 repeat. A B-1 repeat occupies 163 to 176 (IRKLQEEAKAKEEA). The segment at 163–206 (IRKLQEEAKAKEEAEMRKLQEEAKANEEAAAKKLQEEIEAKEKL) is 3 X 14 AA repeats B of [IMA]-[RK]-K-L-Q-E-E-A-K-A-K-E-[EK]-[LA]. One copy of the B-2 repeat lies at 178-191 (MRKLQEEAKANEEA). The B-3 repeat unit spans residues 193–205 (AKKLQEEIEAKEK). The A-4 repeat unit spans residues 206–210 (LEERK). The A-5 repeat unit spans residues 211–215 (LEERR). One copy of the A-6 repeat lies at 216 to 220 (LEERK). A helical transmembrane segment spans residues 322–342 (LMMNVGVAALVIFALGAYVSY). The interval 345-366 (CSSSSSSSSSSPSSSSSSTKPE) is disordered. Low complexity predominate over residues 346–366 (SSSSSSSSSSPSSSSSSTKPE).

Belongs to the small heat shock protein (HSP20) family.

It localises to the cell membrane. In terms of biological role, seems to not be involved in heat resistance. Unable to mediate restriction of long-distance movement of the pathogenic tobacco etch virus (TEV) without causing a hypersensitive response or inducing systemic acquired resistance. The polypeptide is Inactive protein RESTRICTED TEV MOVEMENT 2 (RTM2) (Arabidopsis thaliana (Mouse-ear cress)).